The sequence spans 82 residues: Small ribosomal subunit protein bS16 (82 aa).

Belongs to the bacterial ribosomal protein bS16 family.

The chain is Small ribosomal subunit protein bS16 from Yersinia pseudotuberculosis serotype O:1b (strain IP 31758).